The chain runs to 90 residues: CRISPR-associated endonuclease Cas2 2 (90 aa).

D11 contacts Mg(2+).

This sequence belongs to the CRISPR-associated endoribonuclease Cas2 protein family. Homodimer, forms a heterotetramer with a Cas1 homodimer. The cofactor is Mn(2+). It depends on Mg(2+) as a cofactor.

Inhibited by EDTA and at pH 6.0. In terms of biological role, CRISPR (clustered regularly interspaced short palindromic repeat), is an adaptive immune system that provides protection against mobile genetic elements (viruses, transposable elements and conjugative plasmids). CRISPR clusters contain sequences complementary to antecedent mobile elements and target invading nucleic acids. CRISPR clusters are transcribed and processed into CRISPR RNA (crRNA). Involved in the integration of spacer DNA into the CRISPR cassette. Functions as a dsDNA endonuclease and as a weak ssRNase. This is CRISPR-associated endonuclease Cas2 2 (cas2b) from Thermus thermophilus (strain ATCC BAA-163 / DSM 7039 / HB27).